The chain runs to 244 residues: Phosphoadenosine 5'-phosphosulfate reductase (244 aa).

Cysteine 239 serves as the catalytic Nucleophile; cysteine thiosulfonate intermediate.

The protein belongs to the PAPS reductase family. CysH subfamily.

It localises to the cytoplasm. It catalyses the reaction [thioredoxin]-disulfide + sulfite + adenosine 3',5'-bisphosphate + 2 H(+) = [thioredoxin]-dithiol + 3'-phosphoadenylyl sulfate. It participates in sulfur metabolism; hydrogen sulfide biosynthesis; sulfite from sulfate: step 3/3. Functionally, catalyzes the formation of sulfite from phosphoadenosine 5'-phosphosulfate (PAPS) using thioredoxin as an electron donor. The sequence is that of Phosphoadenosine 5'-phosphosulfate reductase from Cronobacter sakazakii (strain ATCC BAA-894) (Enterobacter sakazakii).